Consider the following 625-residue polypeptide: Ankyrin repeat domain-containing protein oryK (625 aa).

9 ANK repeats span residues 1–27, 31–60, 62–89, 90–119, 162–195, 202–232, 500–530, 534–562, and 568–598; these read MDIY…DVDG, DGKT…GRGP, NPSL…NAER, EHRS…EYQD, FFDY…DVNC, QFET…DLTI, DTRC…NVNF, SDRT…DIDL, and EGRT…DFSI.

The protein operates within secondary metabolite biosynthesis. Functionally, ankyrin repeat domain-containing protein; part of the gene cluster that mediates the biosynthesis of oryzines, natural products with an unusual maleidride backbone. The two subunits of the fungal fatty acid synthase oryfasA and oryfasB probably form octenoic acid. This fatty acid is most likely activated by the acyl-CoA ligase oryP to give octenyl-CoA before the citrate synthase-like protein oryE catalyzes condensation with oxaloacetate to form tricarboxylic acid. The next steps of the pathways are conjectural, but a favorite possible route has been proposed, beginning with decarboxylation and concomitant dehydration by the decarboxylase oryM, followed by tautomerization, which may lead to the production of a diene intermediate. Reduction of this diene intermediate could give the known metabolite piliformic acid. On the pathway to oryzine B and oryzine A, however, hydroxylation of the diene by the alpha-ketoglutarate-dependent dioxygenase oryG and lactonisation by the lactonohydrolases oryH or oryL could give oryzine B directly. Finally, enoyl reduction by the dehydrogenase oryD would then convert oryzine B into oryzine A. In Aspergillus oryzae (strain ATCC 42149 / RIB 40) (Yellow koji mold), this protein is Ankyrin repeat domain-containing protein oryK.